Here is a 276-residue protein sequence, read N- to C-terminus: Ammonia monooxygenase alpha subunit (276 aa).

5 consecutive transmembrane segments (helical) span residues 29 to 49 (VYFP…FMLL), 66 to 86 (PVVT…YLWV), 96 to 116 (LCVV…FYWW), 123 to 143 (FVTP…LYLT), and 150 to 170 (ALVG…PIFG). The Cu(+) site is built by D187, H191, and H204. A helical membrane pass occupies residues 219 to 239 (VIAAFFSAFVSMLMFTVWWYL).

In terms of assembly, the soluble ammonia monooxygenase is a nonamer composed of three alpha subunits (AmoA), three beta subunits (AmoB) and three gamma subunits (Cytochrome c1 PetC). Requires Cu(+) as cofactor.

The protein resides in the cell membrane. The protein localises to the cytoplasm. The catalysed reaction is AH2 + NH4(+) + O2 = hydroxylamine + A + H2O + H(+). With respect to regulation, in vitro, inhibited by acetylene. In fact, acetylene is oxidized to ketene which binds irreversibly to His-191 of ammonia monooxygenase alpha subunit (AmoA). Its function is as follows. Part of the ammonia monooxygenase complex, which catalyzes the oxidation of ammonia to hydroxylamine, the first reaction in the process of ammonia oxidation to nitrite. This chain is Ammonia monooxygenase alpha subunit, found in Nitrosomonas europaea (strain ATCC 19718 / CIP 103999 / KCTC 2705 / NBRC 14298).